The primary structure comprises 277 residues: Release factor glutamine methyltransferase (277 aa).

Residues Gly-119–Gly-123, Asp-142, and Asn-184 contribute to the S-adenosyl-L-methionine site. Asn-184–Tyr-187 contributes to the substrate binding site.

Belongs to the protein N5-glutamine methyltransferase family. PrmC subfamily.

It carries out the reaction L-glutaminyl-[peptide chain release factor] + S-adenosyl-L-methionine = N(5)-methyl-L-glutaminyl-[peptide chain release factor] + S-adenosyl-L-homocysteine + H(+). Methylates the class 1 translation termination release factors RF1/PrfA and RF2/PrfB on the glutamine residue of the universally conserved GGQ motif. The protein is Release factor glutamine methyltransferase of Enterococcus faecalis (strain ATCC 700802 / V583).